Reading from the N-terminus, the 380-residue chain is GPI-anchor transamidase (380 aa).

The signal sequence occupies residues 1–19 (MIVQFVALLLLNLLQIIAA). At 20–354 (ESSHTNNWAV…TRELKYKKHP (335 aa)) the chain is on the lumenal side. Catalysis depends on residues histidine 145 and cysteine 187. Residue asparagine 307 is glycosylated (N-linked (GlcNAc...) asparagine). Residues 355 to 375 (ISRIISAVVCISFSIGFPYYA) form a helical membrane-spanning segment. Residues 376 to 380 (SKYLK) are Cytoplasmic-facing.

It belongs to the peptidase C13 family. As to quaternary structure, forms a complex with PIG-T homolog, PIG-U homolog and PIG-S homolog. Post-translationally, the disulfide bond between PIGK/GPI8 and PIGT is important for normal enzyme activity.

The protein localises to the endoplasmic reticulum membrane. It participates in glycolipid biosynthesis; glycosylphosphatidylinositol-anchor biosynthesis. In terms of biological role, mediates GPI anchoring in the endoplasmic reticulum, by replacing a protein's C-terminal GPI attachment signal peptide with a pre-assembled GPI. During this transamidation reaction, the GPI transamidase forms a carbonyl intermediate with the substrate protein. This is GPI-anchor transamidase (gpi8) from Schizosaccharomyces pombe (strain 972 / ATCC 24843) (Fission yeast).